Consider the following 608-residue polypeptide: Sensor protein kinase WalK (608 aa).

2 consecutive transmembrane segments (helical) span residues 14–34 (LVIVYVLLIIIGMQIIGLYFT) and 183–203 (IFIVGTAISLLITVILGFFIA). The region spanning 204–256 (RTITKPITDMRNQTVEMSRGNYTQRVKIYGNDEIGELALAFNNLSKRVQEAQA) is the HAMP domain. In terms of domain architecture, PAS spans 261-331 (EKRRLDSVIT…EIQENNDSFL (71 aa)). Residues histidine 271, aspartate 274, histidine 364, and glutamate 368 each coordinate Zn(2+). The region spanning 314–378 (LEDEFKLEEI…QQQVERERRE (65 aa)) is the PAC domain. A Histidine kinase domain is found at 382–600 (NVSHELRTPL…SIFITLPCEV (219 aa)). Phosphohistidine; by autocatalysis is present on histidine 385.

As to quaternary structure, forms homodimers. Forms homooligomers. Post-translationally, autophosphorylated.

The protein localises to the cell membrane. The catalysed reaction is ATP + protein L-histidine = ADP + protein N-phospho-L-histidine.. By zinc. Zinc-binding negatively regulates WalK kinase activity and thus autophosphorylation. Its function is as follows. Member of the two-component regulatory system WalK/WalR that regulates genes involved in cell wall metabolism, virulence regulation, biofilm production, oxidative stress resistance and antibiotic resistance via direct or indirect regulation of autolysins. Functions as a sensor protein kinase which is autophosphorylated at a histidine residue in the dimerization domain and transfers its phosphate group to the conserved aspartic acid residue in the regulatory domain of WalR. In turn, WalR binds to the upstream promoter regions of the target genes to positively and negatively regulate their expression. This Staphylococcus aureus (strain MRSA252) protein is Sensor protein kinase WalK (walK).